The chain runs to 227 residues: MAYPVQLGFQDAASPIMEELLYFHDHTLMIMFLISSLVLYIISLMLTTELMHTNTMDAQEVETVWTILPAAILILIALPSLRILYMMDEITTPSLTLKTMGHQWYWSYEYTDYEDLCFDSYMTPSSDLKPGELRLLEVDNRVVLPTELAVRMLISSEDVLHSWTVPSLGVKTDAIPGRLNQATLMASRPGVYYGQCSEICGANHSFMPIVLELVPLKHFEEWLLSML.

The Mitochondrial intermembrane segment spans residues 1–14 (MAYPVQLGFQDAAS). Residues 15–45 (PIMEELLYFHDHTLMIMFLISSLVLYIISLM) traverse the membrane as a helical segment. Over 46 to 59 (LTTELMHTNTMDAQ) the chain is Mitochondrial matrix. Residues 60–87 (EVETVWTILPAAILILIALPSLRILYMM) traverse the membrane as a helical segment. Topologically, residues 88–227 (DEITTPSLTL…HFEEWLLSML (140 aa)) are mitochondrial intermembrane. The Cu cation site is built by histidine 161, cysteine 196, glutamate 198, cysteine 200, histidine 204, and methionine 207. Glutamate 198 provides a ligand contact to Mg(2+).

It belongs to the cytochrome c oxidase subunit 2 family. As to quaternary structure, component of the cytochrome c oxidase (complex IV, CIV), a multisubunit enzyme composed of 14 subunits. The complex is composed of a catalytic core of 3 subunits MT-CO1, MT-CO2 and MT-CO3, encoded in the mitochondrial DNA, and 11 supernumerary subunits COX4I, COX5A, COX5B, COX6A, COX6B, COX6C, COX7A, COX7B, COX7C, COX8 and NDUFA4, which are encoded in the nuclear genome. The complex exists as a monomer or a dimer and forms supercomplexes (SCs) in the inner mitochondrial membrane with NADH-ubiquinone oxidoreductase (complex I, CI) and ubiquinol-cytochrome c oxidoreductase (cytochrome b-c1 complex, complex III, CIII), resulting in different assemblies (supercomplex SCI(1)III(2)IV(1) and megacomplex MCI(2)III(2)IV(2)). Found in a complex with TMEM177, COA6, COX18, COX20, SCO1 and SCO2. Interacts with TMEM177 in a COX20-dependent manner. Interacts with COX20. Interacts with COX16. Cu cation is required as a cofactor.

The protein resides in the mitochondrion inner membrane. It catalyses the reaction 4 Fe(II)-[cytochrome c] + O2 + 8 H(+)(in) = 4 Fe(III)-[cytochrome c] + 2 H2O + 4 H(+)(out). In terms of biological role, component of the cytochrome c oxidase, the last enzyme in the mitochondrial electron transport chain which drives oxidative phosphorylation. The respiratory chain contains 3 multisubunit complexes succinate dehydrogenase (complex II, CII), ubiquinol-cytochrome c oxidoreductase (cytochrome b-c1 complex, complex III, CIII) and cytochrome c oxidase (complex IV, CIV), that cooperate to transfer electrons derived from NADH and succinate to molecular oxygen, creating an electrochemical gradient over the inner membrane that drives transmembrane transport and the ATP synthase. Cytochrome c oxidase is the component of the respiratory chain that catalyzes the reduction of oxygen to water. Electrons originating from reduced cytochrome c in the intermembrane space (IMS) are transferred via the dinuclear copper A center (CU(A)) of subunit 2 and heme A of subunit 1 to the active site in subunit 1, a binuclear center (BNC) formed by heme A3 and copper B (CU(B)). The BNC reduces molecular oxygen to 2 water molecules using 4 electrons from cytochrome c in the IMS and 4 protons from the mitochondrial matrix. This chain is Cytochrome c oxidase subunit 2 (MT-CO2), found in Lemur catta (Ring-tailed lemur).